The following is an 89-amino-acid chain: FMRFamide-like neuropeptides 19 (89 aa).

The N-terminal stretch at 1–20 (MSFQLTLFSMLFLLIAVVVG) is a signal peptide. The propeptide occupies 21–67 (QPIQSQNGDLKMQAVQDNSPLNMEAFNDDSALYDYLEQSDPSLKSME). The residue at position 76 (Phe-76) is a Phenylalanine amide. Positions 80–89 (ASWASSVRFG) are excised as a propeptide.

It belongs to the FARP (FMRFamide related peptide) family. In terms of tissue distribution, each flp gene is expressed in a distinct set of neurons. Flp-19 is expressed in the URX interneurons, the serotonin and acetylcholine-expressing HSN neurons, and the AIN, AWA and BAG neurons.

Its subcellular location is the secreted. In terms of biological role, FMRFamides and FMRFamide-like peptides are neuropeptides. WANQVRF-amide inhibits the activity of dissected pharyngeal myogenic muscle system. This chain is FMRFamide-like neuropeptides 19, found in Caenorhabditis elegans.